The primary structure comprises 469 residues: Exodeoxyribonuclease 7 large subunit (469 aa).

Belongs to the XseA family. As to quaternary structure, heterooligomer composed of large and small subunits.

It localises to the cytoplasm. The enzyme catalyses Exonucleolytic cleavage in either 5'- to 3'- or 3'- to 5'-direction to yield nucleoside 5'-phosphates.. Functionally, bidirectionally degrades single-stranded DNA into large acid-insoluble oligonucleotides, which are then degraded further into small acid-soluble oligonucleotides. This is Exodeoxyribonuclease 7 large subunit from Mycoplasma mycoides subsp. mycoides SC (strain CCUG 32753 / NCTC 10114 / PG1).